We begin with the raw amino-acid sequence, 107 residues long: Phosphoribosyl-ATP pyrophosphatase (107 aa).

This sequence belongs to the PRA-PH family.

It is found in the cytoplasm. It carries out the reaction 1-(5-phospho-beta-D-ribosyl)-ATP + H2O = 1-(5-phospho-beta-D-ribosyl)-5'-AMP + diphosphate + H(+). It participates in amino-acid biosynthesis; L-histidine biosynthesis; L-histidine from 5-phospho-alpha-D-ribose 1-diphosphate: step 2/9. This Bacillus mycoides (strain KBAB4) (Bacillus weihenstephanensis) protein is Phosphoribosyl-ATP pyrophosphatase.